We begin with the raw amino-acid sequence, 298 residues long: ATP synthase F(1) complex subunit gamma, mitochondrial (298 aa).

Residues 1–25 constitute a mitochondrion transit peptide; it reads MFSRAGVAGLSAWTLQPQWIQVRNM. Lys-39 carries the post-translational modification N6-acetyllysine. Residue Lys-49 is modified to N6-succinyllysine. Lys-55 is modified (N6-acetyllysine). Lys-115 carries the post-translational modification N6-acetyllysine; alternate. Lys-115 is subject to N6-succinyllysine; alternate. Phosphoserine is present on Ser-146. Residue Lys-154 is modified to N6-acetyllysine; alternate. An N6-succinyllysine; alternate modification is found at Lys-154. Position 197 is an N6-acetyllysine (Lys-197). Residue Lys-270 is modified to N6-succinyllysine.

It belongs to the ATPase gamma chain family. In terms of assembly, component of the ATP synthase complex composed at least of ATP5F1A/subunit alpha, ATP5F1B/subunit beta, ATP5MC1/subunit c (homooctomer), MT-ATP6/subunit a, MT-ATP8/subunit 8, ATP5ME/subunit e, ATP5MF/subunit f, ATP5MG/subunit g, ATP5MK/subunit k, ATP5MJ/subunit j, ATP5F1C/subunit gamma, ATP5F1D/subunit delta, ATP5F1E/subunit epsilon, ATP5PF/subunit F6, ATP5PB/subunit b, ATP5PD/subunit d, ATP5PO/subunit OSCP. ATP synthase complex consists of a soluble F(1) head domain (subunits alpha(3) and beta(3)) - the catalytic core - and a membrane F(0) domain - the membrane proton channel (subunits c, a, 8, e, f, g, k and j). These two domains are linked by a central stalk (subunits gamma, delta, and epsilon) rotating inside the F1 region and a stationary peripheral stalk (subunits F6, b, d, and OSCP). Interacts with FLVCR2; this interaction occurs in the absence of heme and is disrupted upon heme binding.

It localises to the mitochondrion inner membrane. Subunit gamma, of the mitochondrial membrane ATP synthase complex (F(1)F(0) ATP synthase or Complex V) that produces ATP from ADP in the presence of a proton gradient across the membrane which is generated by electron transport complexes of the respiratory chain. ATP synthase complex consist of a soluble F(1) head domain - the catalytic core - and a membrane F(1) domain - the membrane proton channel. These two domains are linked by a central stalk rotating inside the F(1) region and a stationary peripheral stalk. During catalysis, ATP synthesis in the catalytic domain of F(1) is coupled via a rotary mechanism of the central stalk subunits to proton translocation. In vivo, can only synthesize ATP although its ATP hydrolase activity can be activated artificially in vitro. With the central stalk subunit delta, is essential for the biogenesis of F(1) catalytic part of the ATP synthase complex namely in the formation of F1 assembly intermediate. In Macaca fascicularis (Crab-eating macaque), this protein is ATP synthase F(1) complex subunit gamma, mitochondrial.